The following is a 441-amino-acid chain: Serine hydroxymethyltransferase (441 aa).

124 to 126 (GHI) is a (6S)-5,6,7,8-tetrahydrofolate binding site. The residue at position 239 (lysine 239) is an N6-(pyridoxal phosphate)lysine.

It belongs to the SHMT family. In terms of assembly, homodimer. It depends on pyridoxal 5'-phosphate as a cofactor.

It localises to the cytoplasm. Its pathway is amino-acid biosynthesis; glycine biosynthesis; glycine from L-serine: step 1/1. Catalyzes the reversible interconversion of serine and glycine with a modified folate serving as the one-carbon carrier. Also exhibits a pteridine-independent aldolase activity toward beta-hydroxyamino acids, producing glycine and aldehydes, via a retro-aldol mechanism. The polypeptide is Serine hydroxymethyltransferase (Cenarchaeum symbiosum (strain A)).